Consider the following 261-residue polypeptide: NAD(P)H-quinone oxidoreductase subunit K, chloroplastic (261 aa).

Positions 64, 65, 129, and 160 each coordinate [4Fe-4S] cluster.

The protein belongs to the complex I 20 kDa subunit family. In terms of assembly, NDH is composed of at least 16 different subunits, 5 of which are encoded in the nucleus. It depends on [4Fe-4S] cluster as a cofactor.

Its subcellular location is the plastid. The protein resides in the chloroplast thylakoid membrane. The enzyme catalyses a plastoquinone + NADH + (n+1) H(+)(in) = a plastoquinol + NAD(+) + n H(+)(out). The catalysed reaction is a plastoquinone + NADPH + (n+1) H(+)(in) = a plastoquinol + NADP(+) + n H(+)(out). Functionally, NDH shuttles electrons from NAD(P)H:plastoquinone, via FMN and iron-sulfur (Fe-S) centers, to quinones in the photosynthetic chain and possibly in a chloroplast respiratory chain. The immediate electron acceptor for the enzyme in this species is believed to be plastoquinone. Couples the redox reaction to proton translocation, and thus conserves the redox energy in a proton gradient. The polypeptide is NAD(P)H-quinone oxidoreductase subunit K, chloroplastic (Physcomitrium patens (Spreading-leaved earth moss)).